Here is a 773-residue protein sequence, read N- to C-terminus: Leucine-rich repeat-containing protein let-4 (773 aa).

A signal peptide spans 1-20; sequence MRLLLCLLLFSTLLINSTNA. The Extracellular portion of the chain corresponds to 21 to 689; the sequence is CPGVITQACF…RLEKSFFTTT (669 aa). 16 LRR repeats span residues 61–84, 85–107, 109–132, 133–157, 159–181, 183–206, 207–230, 231–254, 256–278, 279–302, 303–326, 328–349, 350–373, 375–397, 399–421, and 486–516; these read VGLIQSLTMNQAELVELPPNFFSG, LFIRRLDLSQNKIKKIDDAAFAG, NPVLEEVVLNHNLIEKVPAAALAG, LPNLLRLDLSNNSIVEIQEQEIFPN, NKLYDINLGSNKIFSIHTSTFQN, KNSIQTINLGHNNMTAVPSSAIRG, LKQLQSLHLHKNRIEQLDALNFLN, LPVLNLLNLAGNQIHELNRQAFLN, PSLRYLYLSGNKITKLTAYQFQT, FEQLEMLDLTNNEIGAIPANSLSG, LKQLRQLYLAHNKISNISSNAFTN, SIVVLVLSSNELKTLTAGIISG, LPNLQQVSFRDNQIKTINRNAFYD, ASLVMLDLAKNQLTEIAPTTFLA, LNLLLVDLSENKLPKTPYSAFNS, and LVQIPKMQIHRNVHTTTGDQAPQIPSGAFQQ. A helical membrane pass occupies residues 690–710; sequence IIFICVGTAVIVLVVVIAGLC. Over 711 to 773 the chain is Cytoplasmic; the sequence is ISKHRQLQFE…PGSSYCNYYK (63 aa).

In L1 larvae, expressed in a subset of epithelial cells including epidermal, vulval and rectal cells and the excretory duct and pore. Absent from internal epithelia such as the gut and pharyngeal tubes. Transiently expressed in the excretory canal cell at the 1.5-fold embryonic stage but no longer visible in this cell at hatching.

It localises to the apical cell membrane. Functionally, required for apical extracellular matrix organization and epithelial junction maintenance. This is Leucine-rich repeat-containing protein let-4 (let-4) from Caenorhabditis elegans.